A 355-amino-acid polypeptide reads, in one-letter code: MEFFESAFWTGFLWPLIIMVAESVLVLVVLLVAIAYILLADRKIWAAVQIRRGPNVVGPWGLLQSFADLLKFVLKEPIIPAGANKGVFLLAPLVSCVLALAAWAVIPTNLGWVISDINVGILFIFAISSLSIYGIIMAGWSSNSKYPFLAALRSAAQMVSYEVSIGFVIITVLLCAGTLNLSAVVEAQHVRGLASLIGLPQLTILNWYVWPLFPMFVVFYVSALAETNRPPFDLVEAESELVAGFMVEYGSTPYLLFMLGEYVAIVTMCAMATILFLGGWLPPVDLPPFNWVPGIIWFLLKVFFMFFLFAMAKAIVPRYRYDQLMRLGWKVFLPLSLAMVIVVAGVLHFAGIAPK.

Transmembrane regions (helical) follow at residues 17 to 37 (IIMV…IAYI), 86 to 106 (GVFL…WAVI), 119 to 139 (VGIL…IMAG), 165 to 185 (IGFV…SAVV), 204 to 224 (ILNW…VSAL), 262 to 282 (YVAI…GWLP), 291 to 311 (WVPG…LFAM), and 332 to 352 (FLPL…FAGI).

The protein belongs to the complex I subunit 1 family. In terms of assembly, NDH-1 is composed of 14 different subunits. Subunits NuoA, H, J, K, L, M, N constitute the membrane sector of the complex.

It is found in the cell inner membrane. The enzyme catalyses a quinone + NADH + 5 H(+)(in) = a quinol + NAD(+) + 4 H(+)(out). Its function is as follows. NDH-1 shuttles electrons from NADH, via FMN and iron-sulfur (Fe-S) centers, to quinones in the respiratory chain. The immediate electron acceptor for the enzyme in this species is believed to be ubiquinone. Couples the redox reaction to proton translocation (for every two electrons transferred, four hydrogen ions are translocated across the cytoplasmic membrane), and thus conserves the redox energy in a proton gradient. This subunit may bind ubiquinone. The polypeptide is NADH-quinone oxidoreductase subunit H (Bradyrhizobium diazoefficiens (strain JCM 10833 / BCRC 13528 / IAM 13628 / NBRC 14792 / USDA 110)).